The chain runs to 256 residues: Thiazole synthase (256 aa).

Lys95 acts as the Schiff-base intermediate with DXP in catalysis. Residues Gly156, 183 to 184 (AG), and 205 to 206 (NT) contribute to the 1-deoxy-D-xylulose 5-phosphate site.

The protein belongs to the ThiG family. Homotetramer. Forms heterodimers with either ThiH or ThiS.

It localises to the cytoplasm. The catalysed reaction is [ThiS sulfur-carrier protein]-C-terminal-Gly-aminoethanethioate + 2-iminoacetate + 1-deoxy-D-xylulose 5-phosphate = [ThiS sulfur-carrier protein]-C-terminal Gly-Gly + 2-[(2R,5Z)-2-carboxy-4-methylthiazol-5(2H)-ylidene]ethyl phosphate + 2 H2O + H(+). Its pathway is cofactor biosynthesis; thiamine diphosphate biosynthesis. Its function is as follows. Catalyzes the rearrangement of 1-deoxy-D-xylulose 5-phosphate (DXP) to produce the thiazole phosphate moiety of thiamine. Sulfur is provided by the thiocarboxylate moiety of the carrier protein ThiS. In vitro, sulfur can be provided by H(2)S. This Gluconacetobacter diazotrophicus (strain ATCC 49037 / DSM 5601 / CCUG 37298 / CIP 103539 / LMG 7603 / PAl5) protein is Thiazole synthase.